We begin with the raw amino-acid sequence, 189 residues long: Ras-like protein 1 (189 aa).

10–17 is a binding site for GTP; that stretch reads GGGGVGKS. Positions 32–40 match the Effector region motif; sequence YDPTIEDSY. Residues 57 to 61 and 116 to 119 contribute to the GTP site; these read DTAGQ and NKCD. Cys186 carries the cysteine methyl ester modification. A lipid anchor (S-geranylgeranyl cysteine) is attached at Cys186. Positions 187-189 are cleaved as a propeptide — removed in mature form; the sequence is LLL.

This sequence belongs to the small GTPase superfamily. Ras family.

The protein localises to the cell membrane. The catalysed reaction is GTP + H2O = GDP + phosphate + H(+). Functionally, ras proteins bind GDP/GTP and possess intrinsic GTPase activity. The polypeptide is Ras-like protein 1 (RAS1) (Physarum polycephalum (Slime mold)).